Reading from the N-terminus, the 257-residue chain is DNA repair protein RecO (257 aa).

Belongs to the RecO family.

Involved in DNA repair and RecF pathway recombination. This Variovorax paradoxus (strain S110) protein is DNA repair protein RecO.